The sequence spans 157 residues: Deoxyuridine 5'-triphosphate nucleotidohydrolase (157 aa).

Residues 76–78, Asn-89, 93–95, and Lys-103 each bind substrate; these read RSG and TID.

It belongs to the dUTPase family. Requires Mg(2+) as cofactor.

The enzyme catalyses dUTP + H2O = dUMP + diphosphate + H(+). Its pathway is pyrimidine metabolism; dUMP biosynthesis; dUMP from dCTP (dUTP route): step 2/2. Functionally, this enzyme is involved in nucleotide metabolism: it produces dUMP, the immediate precursor of thymidine nucleotides and it decreases the intracellular concentration of dUTP so that uracil cannot be incorporated into DNA. The protein is Deoxyuridine 5'-triphosphate nucleotidohydrolase of Brucella abortus (strain 2308).